A 288-amino-acid polypeptide reads, in one-letter code: Alpha/beta hydrolase domain-containing protein 17B (288 aa).

Residues Ser170, Asp235, and His264 each act as charge relay system in the active site. At Ser282 the chain carries Phosphoserine.

Belongs to the AB hydrolase superfamily. ABHD17 family. Palmitoylated on cysteine residues located in a cysteine cluster at the N-terminus which promotes membrane localization. Palmitoylation is required for post-synaptic localization and for depalmitoylating activity towards DLG4/PSD95.

It localises to the cell membrane. Its subcellular location is the recycling endosome membrane. The protein localises to the cell projection. It is found in the dendritic spine. The protein resides in the postsynaptic density membrane. The enzyme catalyses S-hexadecanoyl-L-cysteinyl-[protein] + H2O = L-cysteinyl-[protein] + hexadecanoate + H(+). Its activity is regulated as follows. Inhibited by palmostatin-B. Hydrolyzes fatty acids from S-acylated cysteine residues in proteins. Has depalmitoylating activity towards DLG4/PSD95. Has depalmitoylating activity towards GAP43. Has depalmitoylating activity towards MAP6. Has depalmitoylating activity towards NRAS. This Homo sapiens (Human) protein is Alpha/beta hydrolase domain-containing protein 17B.